A 420-amino-acid chain; its full sequence is S-adenosylmethionine synthase (420 aa).

H16 lines the ATP pocket. Position 18 (D18) interacts with Mg(2+). E44 contacts K(+). L-methionine contacts are provided by E57 and Q100. Positions Q100 to K110 are flexible loop. Residues D175 to K177, K251 to F252, D260, R266 to K267, A283, and K287 each bind ATP. L-methionine is bound at residue D260. K291 contributes to the L-methionine binding site.

It belongs to the AdoMet synthase family. As to quaternary structure, homotetramer; dimer of dimers. Requires Mg(2+) as cofactor. The cofactor is K(+).

Its subcellular location is the cytoplasm. It carries out the reaction L-methionine + ATP + H2O = S-adenosyl-L-methionine + phosphate + diphosphate. It functions in the pathway amino-acid biosynthesis; S-adenosyl-L-methionine biosynthesis; S-adenosyl-L-methionine from L-methionine: step 1/1. Its function is as follows. Catalyzes the formation of S-adenosylmethionine (AdoMet) from methionine and ATP. The overall synthetic reaction is composed of two sequential steps, AdoMet formation and the subsequent tripolyphosphate hydrolysis which occurs prior to release of AdoMet from the enzyme. This chain is S-adenosylmethionine synthase, found in Trichodesmium erythraeum (strain IMS101).